We begin with the raw amino-acid sequence, 862 residues long: C-type lectin domain-containing protein 161 (862 aa).

A signal peptide spans 1–20; it reads MYRRTTLWFLLLFQPILVFA. 2 N-linked (GlcNAc...) asparagine glycosylation sites follow: Asn22 and Asn91. One can recognise a C-type lectin 1 domain in the interval 41 to 154; the sequence is SLNACFKLYN…VGQKLPFVCT (114 aa). Cys62 and Cys153 form a disulfide bridge. The tract at residues 162–291 is disordered; that stretch reads AGPAPVHAMR…SDESSDEAYD (130 aa). The segment covering 198–218 has biased composition (basic and acidic residues); that stretch reads SDKKEKKEVASDKKKESKKDE. A glycan (N-linked (GlcNAc...) asparagine) is linked at Asn222. The span at 242 to 252 shows a compositional bias: basic and acidic residues; that stretch reads SDKKESSKKDE. Residues Asn258, Asn279, and Asn352 are each glycosylated (N-linked (GlcNAc...) asparagine). Low complexity predominate over residues 265-283; that stretch reads ANAEMSASISASSANSSSD. Disordered regions lie at residues 377–437, 450–469, and 474–504; these read MTMR…SASL, ALAS…QKSA, and AVVS…IDES. Residues 388 to 418 show a composition bias toward low complexity; it reads SSSNTDSESASISESSQASEQAVMAAAMSAK. Composition is skewed to basic and acidic residues over residues 455 to 467 and 478 to 491; these read SKSD…KDQK and ENKH…DPKS. A glycan (N-linked (GlcNAc...) asparagine) is linked at Asn559. C-type lectin domains are found at residues 562–687 and 716–828; these read APAL…SVLC and KNGK…FVSV. A disulfide bond links Cys653 and Cys678. A glycan (N-linked (GlcNAc...) asparagine) is linked at Asn765. An intrachain disulfide couples Cys807 to Cys819. N-linked (GlcNAc...) asparagine glycosylation is found at Asn831 and Asn857.

Its subcellular location is the secreted. In Caenorhabditis elegans, this protein is C-type lectin domain-containing protein 161 (clec-161).